The chain runs to 1216 residues: Metabotropic glycine receptor (1216 aa).

The first 23 residues, 1 to 23 (MGVMAYPFLFCLLLVHFGLGAIG), serve as a signal peptide directing secretion. Topologically, residues 24 to 417 (ASREAPSRPD…CFVQEDKYLR (394 aa)) are extracellular. Residues 25 to 65 (SREAPSRPDPPRERTLRAKQHAQQPARASASDPSAPWSRST) form a disordered region. Over residues 28–40 (APSRPDPPRERTL) the composition is skewed to basic and acidic residues. Positions 46–64 (AQQPARASASDPSAPWSRS) are enriched in low complexity. The tract at residues 85-281 (YLYTGDSHKL…CENGSYKPGW (197 aa)) is cache-like region. 2 N-linked (GlcNAc...) asparagine glycosylation sites follow: N98 and N143. The cysteines at positions 99 and 272 are disulfide-linked. The glycine site is built by S172 and R173. An N-linked (GlcNAc...) asparagine glycan is attached at N215. A glycine-binding site is contributed by E271. An N-linked (GlcNAc...) asparagine glycan is attached at N274. Residue D307 participates in glycine binding. The N-linked (GlcNAc...) asparagine glycan is linked to N333. A helical transmembrane segment spans residues 418 to 439 (LAIISFQALCMLLDFLSMLVVY). At 440–451 (RFRKAKSIRASG) the chain is on the cytoplasmic side. A helical membrane pass occupies residues 452–474 (LILLETILFGSLLLYFPVVILYF). Over 475-478 (EPST) the chain is Extracellular. Residues 479-501 (FRCILLRWVRLLGFATVYGTVTL) form a helical membrane-spanning segment. Cysteines 481 and 573 form a disulfide. The Cytoplasmic portion of the chain corresponds to 502 to 525 (KLHRVLKVFLSRTAQRIPYMTGGR). Residues 526–547 (VMRMLAVILLVVFWFLVGWTSS) traverse the membrane as a helical segment. At 548–576 (VCQNLERHISLIGQGRTSDHLIFSMCLVE) the chain is on the extracellular side. Residues 577 to 597 (RWDYMTAAAEFLFLLWGVYLC) form a helical membrane-spanning segment. Over 598 to 611 (YAVRTVPSAFHEPR) the chain is Cytoplasmic. Residues 612–633 (YMAVAVHNELIISAIFHTIRFV) form a helical membrane-spanning segment. Residues 634–642 (LASRLQSDW) are Extracellular-facing. Residues 643–664 (MLMLYFAHTHLTVTVTIGLLLI) traverse the membrane as a helical segment. Residues 665–1216 (PKFSHSSNNP…NEEVRLARKV (552 aa)) lie on the Cytoplasmic side of the membrane. A phosphoserine mark is found at S694, S705, and S708. Disordered stretches follow at residues 757–875 (RITE…ESVP) and 911–1000 (KEKT…HMKD). The segment covering 769–781 (CSKEDKDGGEHGS) has biased composition (basic and acidic residues). K774 is covalently cross-linked (Glycyl lysine isopeptide (Lys-Gly) (interchain with G-Cter in ubiquitin)). Residues 864 to 873 (EDSQAVSTES) are compositionally biased toward polar residues. S866 carries the phosphoserine modification. The segment covering 926 to 944 (VEERAKAQKALPRERETNR) has biased composition (basic and acidic residues). Composition is skewed to polar residues over residues 945–963 (KYSN…PNSS) and 980–991 (QRANPTTANSDL). At S947 the chain carries Phosphoserine. Residues 1007 to 1011 (VCPWE) carry the VCPWE motif 1 motif. The interval 1038–1072 (ERNPTFSLKEKSHPKPKAADLCQQSNPKSVDKAEV) is disordered. Position 1066 is a phosphoserine (S1066). The short motif at 1072 to 1076 (VCPWE) is the VCPWE motif 2 element. S1081 carries the phosphoserine modification. The disordered stretch occupies residues 1128–1167 (SKVENENLNQLGEQEKKTSSSERNVPDSHNSSNNFQPPLM). Over residues 1140–1153 (EQEKKTSSSERNVP) the composition is skewed to basic and acidic residues. Residues 1154-1163 (DSHNSSNNFQ) show a composition bias toward polar residues. A VCPWE motif 3 motif is present at residues 1172-1176 (VCPWE).

It belongs to the G-protein coupled receptor 3 family. As to quaternary structure, homodimer. Associates with the RGS7-GNB5 complex, promoting its localization to the cell membrane and regulating its GTPase activator activity. Interacts (via VCPWE motifs) with GNAO1. Interacts with GPC4. Interacts with EGFLAM.

Its subcellular location is the cell membrane. It localises to the postsynaptic cell membrane. The protein localises to the presynaptic cell membrane. The protein resides in the nucleus. Its function is as follows. Metabotropic receptor for glycine that controls synapse formation and function in the brain. Acts as an atypical G-protein coupled receptor that recruits and regulates the RGS7-GNB5 complex instead of activating G proteins. In absence of glycine ligand, promotes the GTPase activator activity of RGS7, increasing the GTPase activity of G protein alpha subunits, thereby driving them into their inactive GDP-bound form. Glycine-binding changes the conformation of the intracellular surface, inhibiting the GTPase activator activity of the RGS7-GNB5 complex, promoting G protein alpha subunits into their active GTP-bound form and regulating cAMP levels. Also able to bind taurine, a compound closely related to glycine, but with a two-fold lower affinity. Glycine receptor-dependent regulation of cAMP controls key ion channels, kinases and neurotrophic factors involved in neuronal excitability and synaptic transmission. Plays a pivotal role in regulating mood and cognition via its ability to regulate neuronal excitability in L2/L3 pyramidal neurons of the prefrontal cortex. Also involved in spatial learning by regulating hippocampal CA1 neuronal excitability. Acts as a synaptic organizer in the hippocampus, required for proper mossy fiber-CA3 neurocircuitry establishment, structure and function: induces presynaptic differentiation in contacting axons via its interaction with GPC4. In addition to glycine, may also act as a receptor for osteocalcin (BGLAP) hormone: osteocalcin-binding initiates a signaling response that prevents neuronal apoptosis in the hippocampus and regulates the synthesis of neurotransmitters. The chain is Metabotropic glycine receptor (GPR158) from Bos taurus (Bovine).